The following is a 197-amino-acid chain: Small ribosomal subunit protein uS4B (197 aa).

One can recognise an S4 RNA-binding domain in the interval 88 to 150 (SRLDNMVYRM…SRKTEMFVNN (63 aa)).

This sequence belongs to the universal ribosomal protein uS4 family. As to quaternary structure, part of the 30S ribosomal subunit. Contacts protein S5. The interaction surface between S4 and S5 is involved in control of translational fidelity.

Functionally, one of the primary rRNA binding proteins, it binds directly to 16S rRNA where it nucleates assembly of the body of the 30S subunit. With S5 and S12 plays an important role in translational accuracy. In Clostridium perfringens (strain 13 / Type A), this protein is Small ribosomal subunit protein uS4B (rpsD2).